The following is a 338-amino-acid chain: Ketol-acid reductoisomerase (NADP(+)) (338 aa).

One can recognise a KARI N-terminal Rossmann domain in the interval 1–181 (MHVYYDKDCD…GGGRTGIIET (181 aa)). NADP(+) is bound by residues 24–27 (YGSQ), Arg47, Ser50, Thr52, and 82–85 (DEFQ). The active site involves His107. Gly133 is an NADP(+) binding site. The KARI C-terminal knotted domain occupies 182-327 (TFKDETETDL…AKLRAMMPWI (146 aa)). Asp190, Glu194, Glu226, and Glu230 together coordinate Mg(2+). Ser251 provides a ligand contact to substrate.

Belongs to the ketol-acid reductoisomerase family. Mg(2+) serves as cofactor.

It catalyses the reaction (2R)-2,3-dihydroxy-3-methylbutanoate + NADP(+) = (2S)-2-acetolactate + NADPH + H(+). The catalysed reaction is (2R,3R)-2,3-dihydroxy-3-methylpentanoate + NADP(+) = (S)-2-ethyl-2-hydroxy-3-oxobutanoate + NADPH + H(+). It functions in the pathway amino-acid biosynthesis; L-isoleucine biosynthesis; L-isoleucine from 2-oxobutanoate: step 2/4. It participates in amino-acid biosynthesis; L-valine biosynthesis; L-valine from pyruvate: step 2/4. Functionally, involved in the biosynthesis of branched-chain amino acids (BCAA). Catalyzes an alkyl-migration followed by a ketol-acid reduction of (S)-2-acetolactate (S2AL) to yield (R)-2,3-dihydroxy-isovalerate. In the isomerase reaction, S2AL is rearranged via a Mg-dependent methyl migration to produce 3-hydroxy-3-methyl-2-ketobutyrate (HMKB). In the reductase reaction, this 2-ketoacid undergoes a metal-dependent reduction by NADPH to yield (R)-2,3-dihydroxy-isovalerate. This Cellvibrio japonicus (strain Ueda107) (Pseudomonas fluorescens subsp. cellulosa) protein is Ketol-acid reductoisomerase (NADP(+)).